The sequence spans 438 residues: Mitochondrial distribution and morphology protein 12 (438 aa).

The SMP-LTD domain maps to 1-438 (MSIEVDWAAA…VYPSFWTFLV (438 aa)). 3 disordered regions span residues 110 to 154 (SFSH…TSTL), 185 to 277 (SDSG…MRER), and 353 to 379 (GSEQ…KDKE). The span at 212–226 (DTTNSTSRPSTANTL) shows a compositional bias: polar residues. Over residues 227-245 (PSHPSLGHSGSSGSNPHTS) the composition is skewed to low complexity. Residues 354–364 (SEQSQGSQNPS) show a composition bias toward polar residues. Residues 365–379 (DDGRPRSGGDQKDKE) are compositionally biased toward basic and acidic residues.

This sequence belongs to the MDM12 family. Component of the ER-mitochondria encounter structure (ERMES) or MDM complex, composed of mmm1, mdm10, mdm12 and mdm34. A mmm1 homodimer associates with one molecule of mdm12 on each side in a pairwise head-to-tail manner, and the SMP-LTD domains of mmm1 and mdm12 generate a continuous hydrophobic tunnel for phospholipid trafficking.

It localises to the mitochondrion outer membrane. The protein resides in the endoplasmic reticulum membrane. Component of the ERMES/MDM complex, which serves as a molecular tether to connect the endoplasmic reticulum (ER) and mitochondria. Components of this complex are involved in the control of mitochondrial shape and protein biogenesis, and function in nonvesicular lipid trafficking between the ER and mitochondria. Mdm12 is required for the interaction of the ER-resident membrane protein mmm1 and the outer mitochondrial membrane-resident beta-barrel protein mdm10. The mdm12-mmm1 subcomplex functions in the major beta-barrel assembly pathway that is responsible for biogenesis of all mitochondrial outer membrane beta-barrel proteins, and acts in a late step after the SAM complex. The mdm10-mdm12-mmm1 subcomplex further acts in the TOM40-specific pathway after the action of the mdm12-mmm1 complex. Essential for establishing and maintaining the structure of mitochondria and maintenance of mtDNA nucleoids. The sequence is that of Mitochondrial distribution and morphology protein 12 from Penicillium rubens (strain ATCC 28089 / DSM 1075 / NRRL 1951 / Wisconsin 54-1255) (Penicillium chrysogenum).